The chain runs to 152 residues: Transcriptional regulator MraZ (152 aa).

2 consecutive SpoVT-AbrB domains span residues 5-52 (ASAI…PVQE) and 81-124 (AHEC…DEAA).

Belongs to the MraZ family. As to quaternary structure, forms oligomers.

It is found in the cytoplasm. It localises to the nucleoid. The protein is Transcriptional regulator MraZ of Shewanella piezotolerans (strain WP3 / JCM 13877).